The primary structure comprises 1058 residues: COP1-interacting protein 7 (1058 aa).

3 disordered regions span residues Leu123 to Val147, His262 to Arg281, and Met330 to Asn463. Polar residues-rich tracts occupy residues Thr126–Ser136 and His262–Thr276. A Nuclear localization signal 1 motif is present at residues Ser340 to Lys347. A compositionally biased stretch (basic residues) spans Ser340–Ser353. A compositionally biased stretch (acidic residues) spans Asp403 to Val414. A Nuclear localization signal 2 motif is present at residues Glu431–Ser438. Over residues Arg432–Ser446 the composition is skewed to basic residues. The segment covering His447 to Asp462 has biased composition (basic and acidic residues). Ser477 carries the post-translational modification Phosphoserine. Residues Ala708–Ser887 are disordered. Positions Ser757 to Leu773 are enriched in basic and acidic residues. A Nuclear localization signal 3 motif is present at residues Glu764–Glu771. Residues Lys783–Ser808 are compositionally biased toward low complexity. Composition is skewed to basic and acidic residues over residues Lys860–Ser869 and Lys878–Ser887. Phosphoserine occurs at positions 915, 986, and 992. The segment at Ser1020–Pro1041 is disordered. The span at Glu1026 to Ser1040 shows a compositional bias: basic and acidic residues.

In terms of assembly, interacts with COP1.

It localises to the nucleus. Functionally, exhibits transcriptional activation activity. Positive regulator of light-regulated genes, probably being a direct downstream target of COP1 for mediating light control of gene expression. The sequence is that of COP1-interacting protein 7 from Arabidopsis thaliana (Mouse-ear cress).